The sequence spans 705 residues: Elongation factor G (705 aa).

Positions 8–289 (VNYRNIGISA…TVINYLPSPK (282 aa)) constitute a tr-type G domain. GTP-binding positions include 17 to 24 (AHIDAGKT), 88 to 92 (DTPGH), and 142 to 145 (NKMD).

It belongs to the TRAFAC class translation factor GTPase superfamily. Classic translation factor GTPase family. EF-G/EF-2 subfamily.

It localises to the cytoplasm. Catalyzes the GTP-dependent ribosomal translocation step during translation elongation. During this step, the ribosome changes from the pre-translocational (PRE) to the post-translocational (POST) state as the newly formed A-site-bound peptidyl-tRNA and P-site-bound deacylated tRNA move to the P and E sites, respectively. Catalyzes the coordinated movement of the two tRNA molecules, the mRNA and conformational changes in the ribosome. The polypeptide is Elongation factor G (Wigglesworthia glossinidia brevipalpis).